We begin with the raw amino-acid sequence, 798 residues long: MFSSKERFADLFLKRLEMTCGKSFKDSAKLDQYKTLGNMVREYISADWIETNEKSRSNSGKQTYYLSIEFLLGQLLEQNLMNLGVRDVVEAGLKEIGINLEEILQIENDAGLGNGGLGRLAACFLDSLASLNLPGHGMGIRYKHGLFEQKIVDGHQVELPEQWLKNGNVWEVRNADQAVDVPFWGEVHMTEKSGRLHFRHEQATIVTAVPYDIPIIGYETGTVNTLRLWNAEPYAHYHGGNILSYKRETEAVSEFLYPDDTHDEGKILRLKQQYFLVCASLKSIVNNYRKTHKSLSGLHKKVSIHINDTHPALAVPELMRILLDEENMSWEEAWHITVHTISYTNHTTLSEALEKWPIHLFKPLLPRMYMIIEEINERFCRAVWEKYPGDWKRIENMAITAHGVVKMAHLAIVGSYSVNGVAKIHSDILKEREMRDFHLLFPNRFNNKTNGIAHRRWLLKANPGLSAIITEAIGDEWVKQPESLIRLEPYATDPAFIEQFQNNKSKKKQELADLIFCTAGVVVNPESIFDVQVKRLHAYKRQLLNVLHIMYLYNRLKEDSGFSIYPQTFIFGAKASPSYYYAKKIIKLIHSVAEKVNYDPAVKQLIKVVFLENYRVSMAERIFPASDVSEQISTASKEASGTGNMKFMMNGALTIGTHDGANIEILERVGPDCIYTFGLKADEVLSYQENGGYRSREYYQHDRRIRQVADQLINGFFEGEADEFESIFDSLLPHNDEYFVLKDFSSYADAQERIQADYRERRKWSEHSIVNIAHSGYFSSDRTIREYAKDIWGIKPMM.

An N6-(pyridoxal phosphate)lysine modification is found at K646.

Belongs to the glycogen phosphorylase family. Requires pyridoxal 5'-phosphate as cofactor.

It carries out the reaction [(1-&gt;4)-alpha-D-glucosyl](n) + phosphate = [(1-&gt;4)-alpha-D-glucosyl](n-1) + alpha-D-glucose 1-phosphate. Its function is as follows. Phosphorylase is an important allosteric enzyme in carbohydrate metabolism. Enzymes from different sources differ in their regulatory mechanisms and in their natural substrates. However, all known phosphorylases share catalytic and structural properties. This Bacillus subtilis (strain 168) protein is Glycogen phosphorylase (glgP).